Here is a 174-residue protein sequence, read N- to C-terminus: Negative modulator of initiation of replication (174 aa).

The protein belongs to the SeqA family. In terms of assembly, homodimer. Polymerizes to form helical filaments.

The protein localises to the cytoplasm. Negative regulator of replication initiation, which contributes to regulation of DNA replication and ensures that replication initiation occurs exactly once per chromosome per cell cycle. Binds to pairs of hemimethylated GATC sequences in the oriC region, thus preventing assembly of replication proteins and re-initiation at newly replicated origins. Repression is relieved when the region becomes fully methylated. In Pseudoalteromonas atlantica (strain T6c / ATCC BAA-1087), this protein is Negative modulator of initiation of replication.